Reading from the N-terminus, the 299-residue chain is DNA-binding transcriptional repressor CapW (299 aa).

Residues 1–84 (MESSGSSKVR…EFKPITKRSE (84 aa)) form a winged HTH domain region. A WYL domain region spans residues 85 to 196 (ATRYLNELQR…IGRLDVLEHV (112 aa)). The WYL domain maps to 120 to 200 (SRAIEADEVA…DVLEHVFSAK (81 aa)). Residues 145–189 (YQSMDAPEPQEWVLSPHALGFDGLRWHARAWCHARQVFRDFAIGR) form a probable ligand-binding region region. Residues 197-299 (FSAKPVDPLL…DRDGLQHLRR (103 aa)) are WCX domain.

Homodimer.

Functionally, transcriptional regulator of a CBASS antivirus system. CBASS (cyclic oligonucleotide-based antiphage signaling system) provides immunity against bacteriophage. The CD-NTase protein synthesizes cyclic nucleotides in response to infection; these serve as specific second messenger signals. The signals activate a diverse range of effectors, leading to bacterial cell death and thus abortive phage infection. A type III CBASS system, part of a CapW-Cap6-Cap8-Cap7-CdnC-NucC locus. Binds specifically to palindromes that overlap the -10 site in the promoter of cap6, found beween found between the genes for divergently transcribed capW and cap6 (cognate DNA). Probably represses transcription bidirectionally from the promoter. Mutations that make it a constitutive repressor in E.coli do not change DNA-binding affinity. The sequence is that of DNA-binding transcriptional repressor CapW from Stenotrophomonas maltophilia (Pseudomonas maltophilia).